A 428-amino-acid chain; its full sequence is Histidine--tRNA ligase (428 aa).

Belongs to the class-II aminoacyl-tRNA synthetase family. Homodimer.

The protein localises to the cytoplasm. It carries out the reaction tRNA(His) + L-histidine + ATP = L-histidyl-tRNA(His) + AMP + diphosphate + H(+). This is Histidine--tRNA ligase from Bordetella bronchiseptica (strain ATCC BAA-588 / NCTC 13252 / RB50) (Alcaligenes bronchisepticus).